A 425-amino-acid polypeptide reads, in one-letter code: Riboflavin biosynthesis protein RibBA (425 aa).

Residues 1–204 (MTRLDSVERA…IADLIEWRRK (204 aa)) form a DHBP synthase region. D-ribulose 5-phosphate-binding positions include 28–29 (RE), Asp33, 141–145 (RPGHT), and Glu165. Glu29 serves as a coordination point for Mg(2+). His144 contributes to the Mg(2+) binding site. The tract at residues 205-425 (HEKHIERIAE…HLPGEFGGAL (221 aa)) is GTP cyclohydrolase II. 259–263 (RVHSE) contributes to the GTP binding site. 3 residues coordinate Zn(2+): Cys264, Cys275, and Cys277. GTP-binding positions include Gln280, 303–305 (EGR), and Thr325. Residue Asp337 is the Proton acceptor; for GTP cyclohydrolase activity of the active site. Catalysis depends on Arg339, which acts as the Nucleophile; for GTP cyclohydrolase activity. Positions 360 and 365 each coordinate GTP.

In the N-terminal section; belongs to the DHBP synthase family. The protein in the C-terminal section; belongs to the GTP cyclohydrolase II family. Requires Mg(2+) as cofactor. Mn(2+) is required as a cofactor. The cofactor is Zn(2+).

The enzyme catalyses D-ribulose 5-phosphate = (2S)-2-hydroxy-3-oxobutyl phosphate + formate + H(+). The catalysed reaction is GTP + 4 H2O = 2,5-diamino-6-hydroxy-4-(5-phosphoribosylamino)-pyrimidine + formate + 2 phosphate + 3 H(+). Its pathway is cofactor biosynthesis; riboflavin biosynthesis; 2-hydroxy-3-oxobutyl phosphate from D-ribulose 5-phosphate: step 1/1. The protein operates within cofactor biosynthesis; riboflavin biosynthesis; 5-amino-6-(D-ribitylamino)uracil from GTP: step 1/4. Catalyzes the conversion of D-ribulose 5-phosphate to formate and 3,4-dihydroxy-2-butanone 4-phosphate. Its function is as follows. Catalyzes the conversion of GTP to 2,5-diamino-6-ribosylamino-4(3H)-pyrimidinone 5'-phosphate (DARP), formate and pyrophosphate. This chain is Riboflavin biosynthesis protein RibBA, found in Mycobacterium avium (strain 104).